A 537-amino-acid polypeptide reads, in one-letter code: Membrane protein insertase YidC (537 aa).

The next 5 membrane-spanning stretches (helical) occupy residues 6-26 (SLLA…WEID), 341-363 (LVSN…LYPL), 411-431 (LGGC…YWTF), 449-469 (LSAQ…MFLL), and 490-510 (PVIF…YWLV).

The protein belongs to the OXA1/ALB3/YidC family. Type 1 subfamily. In terms of assembly, interacts with the Sec translocase complex via SecD. Specifically interacts with transmembrane segments of nascent integral membrane proteins during membrane integration.

It localises to the cell inner membrane. Functionally, required for the insertion and/or proper folding and/or complex formation of integral membrane proteins into the membrane. Involved in integration of membrane proteins that insert both dependently and independently of the Sec translocase complex, as well as at least some lipoproteins. Aids folding of multispanning membrane proteins. This Actinobacillus succinogenes (strain ATCC 55618 / DSM 22257 / CCUG 43843 / 130Z) protein is Membrane protein insertase YidC.